Here is a 206-residue protein sequence, read N- to C-terminus: Superoxide dismutase [Mn] (206 aa).

Positions 27, 82, 168, and 172 each coordinate Mn(2+).

The protein belongs to the iron/manganese superoxide dismutase family. In terms of assembly, homodimer. Requires Mn(2+) as cofactor.

The catalysed reaction is 2 superoxide + 2 H(+) = H2O2 + O2. Destroys superoxide anion radicals which are normally produced within the cells and which are toxic to biological systems. The protein is Superoxide dismutase [Mn] (sodA) of Escherichia coli (strain K12).